The primary structure comprises 92 residues: Small ribosomal subunit protein uS19c (92 aa).

The protein belongs to the universal ribosomal protein uS19 family.

Its subcellular location is the plastid. The protein resides in the chloroplast. In terms of biological role, protein S19 forms a complex with S13 that binds strongly to the 16S ribosomal RNA. The sequence is that of Small ribosomal subunit protein uS19c from Dioscorea elephantipes (Elephant's foot yam).